Consider the following 146-residue polypeptide: Snaclec anticoagulant protein subunit B (146 aa).

The N-terminal stretch at 1 to 23 is a signal peptide; the sequence is MGRFIFVSFGLLVLFLSLSGTAA. Residues 24–146 form the C-type lectin domain; sequence DCPSDWSSYE…IANFVCEFQA (123 aa). 3 disulfides stabilise this stretch: cysteine 25–cysteine 36, cysteine 53–cysteine 142, and cysteine 119–cysteine 134. Ca(2+) contacts are provided by serine 64, glutamine 66, and glutamate 70. Glutamate 143 serves as a coordination point for Ca(2+).

This sequence belongs to the snaclec family. In terms of assembly, heterodimer with subunit A of agkisacutacin or AaACP; disulfide-linked. As to expression, expressed by the venom gland.

It is found in the secreted. Functionally, anticoagulant protein which binds to the gamma-carboxyglutamic acid-domain regions of factors IX and factor X in the presence of calcium with a 1 to 1 stoichiometry. Also inhibits platelet aggregation by binding to platelet glycoprotein Ibalpha (GP1BA) and functioning as a blocker of vWF. Is devoid of hemorrhagic and lethal activities. Possesses antithrombotic and thrombolytic activities. Also hydrolyzes the Aalpha-chain of fibrinogen. Does not affect the Bbeta-chain and the gamma chain. This Deinagkistrodon acutus (Hundred-pace snake) protein is Snaclec anticoagulant protein subunit B.